The following is a 193-amino-acid chain: Epididymal-specific lipocalin-12 (193 aa).

The signal sequence occupies residues 1–19; the sequence is MGPWWALWLILTLPQILES. C88 and C193 form a disulfide bridge. N143 and N172 each carry an N-linked (GlcNAc...) asparagine glycan.

The protein belongs to the calycin superfamily. Lipocalin family. As to quaternary structure, monomer. In terms of tissue distribution, expressed in epididymis.

It is found in the secreted. In terms of biological role, binds all-trans retinoic acid and may act as a retinoid carrier protein within the epididymis. May play a role in male fertility. This Mus musculus (Mouse) protein is Epididymal-specific lipocalin-12 (Lcn12).